The primary structure comprises 413 residues: Phosphoglycerate kinase (413 aa).

Residues 19-21, Arg-34, 57-60, Arg-114, and Arg-154 contribute to the substrate site; these read DLN and HQSK. ATP contacts are provided by residues Glu-332 and 358–361; that span reads GGHS.

It belongs to the phosphoglycerate kinase family. In terms of assembly, monomer.

Its subcellular location is the cytoplasm. The enzyme catalyses (2R)-3-phosphoglycerate + ATP = (2R)-3-phospho-glyceroyl phosphate + ADP. Its pathway is carbohydrate degradation; glycolysis; pyruvate from D-glyceraldehyde 3-phosphate: step 2/5. The sequence is that of Phosphoglycerate kinase from Thermococcus sibiricus (strain DSM 12597 / MM 739).